The primary structure comprises 152 residues: Deoxyuridine 5'-triphosphate nucleotidohydrolase (152 aa).

Residues 71 to 73 (RSG), Asn-84, 88 to 90 (LID), and Met-98 contribute to the substrate site.

The protein belongs to the dUTPase family. Mg(2+) is required as a cofactor.

The enzyme catalyses dUTP + H2O = dUMP + diphosphate + H(+). The protein operates within pyrimidine metabolism; dUMP biosynthesis; dUMP from dCTP (dUTP route): step 2/2. Functionally, this enzyme is involved in nucleotide metabolism: it produces dUMP, the immediate precursor of thymidine nucleotides and it decreases the intracellular concentration of dUTP so that uracil cannot be incorporated into DNA. This is Deoxyuridine 5'-triphosphate nucleotidohydrolase from Coxiella burnetii (strain RSA 331 / Henzerling II).